The following is an 89-amino-acid chain: Small ribosomal subunit protein uS15 (89 aa).

Belongs to the universal ribosomal protein uS15 family. In terms of assembly, part of the 30S ribosomal subunit. Forms a bridge to the 50S subunit in the 70S ribosome, contacting the 23S rRNA.

Its function is as follows. One of the primary rRNA binding proteins, it binds directly to 16S rRNA where it helps nucleate assembly of the platform of the 30S subunit by binding and bridging several RNA helices of the 16S rRNA. In terms of biological role, forms an intersubunit bridge (bridge B4) with the 23S rRNA of the 50S subunit in the ribosome. This Shewanella piezotolerans (strain WP3 / JCM 13877) protein is Small ribosomal subunit protein uS15.